We begin with the raw amino-acid sequence, 480 residues long: Glycogen synthase (480 aa).

Lysine 15 serves as a coordination point for ADP-alpha-D-glucose.

Belongs to the glycosyltransferase 1 family. Bacterial/plant glycogen synthase subfamily.

It catalyses the reaction [(1-&gt;4)-alpha-D-glucosyl](n) + ADP-alpha-D-glucose = [(1-&gt;4)-alpha-D-glucosyl](n+1) + ADP + H(+). Its pathway is glycan biosynthesis; glycogen biosynthesis. Functionally, synthesizes alpha-1,4-glucan chains using ADP-glucose. This Desulforamulus reducens (strain ATCC BAA-1160 / DSM 100696 / MI-1) (Desulfotomaculum reducens) protein is Glycogen synthase.